A 461-amino-acid polypeptide reads, in one-letter code: MSPSRSEPLIDNLVDRSNLKIVALASPADGHTFPLLRIVEELVLRGYDVTFLASEDYRARTAAVGAYFVPVPPYDDIQRITTELSVIADPGERMNAAMIELFITPTAGRMATLYAALEDVKREKPLHKVVLLTESFFLGDHPLFLGAPLPKGFTRRPRAINIHACSYGLSSVDSAPFGLTIIPDGTAESREKYRKLHSDMLTGSLAESVALQKKVLTELGATNMDEVEGRNPLDVIATTADVTLQMCPPSLEYRRSDIHPKVRFIGALPPRAPPKTFSAPPFWNTVINGSKRVVVVSQGTVAVRYDQLLVPAMHALADRDDIVVVAILGQKGAELPGEVAIPSNAYTVDYLSYDAMLPYASVFVLNAGYGGFMHGIVNGVPMVLAGGSEDKPEVANRGEFAGVGINLRTGTPSQRQIRQGVDEILSNPKYKRRVKEIQLENEKMKAMDSVEKEILKWAAMD.

The protein belongs to the UDP-glycosyltransferase family.

Its pathway is secondary metabolite biosynthesis. Its function is as follows. UDP-glucosyltransferase; part of the pathway that mediates the biosynthesis of tenellin-type 2-pyridones, iron-chelating compounds involved in iron stress tolerance, competition with the natural competitor fungus Metarhizium robertsii and insect hosts infection. Targets the N-OH hydroxyl residue of 15-hydroxytellenin (15-HT) to produce pyridovericin-N-O-(beta-D-glucopyranoside) which is further methylated by the methyltransferase MT1 to yield pyridovericin-N-O-(4-O-methyl-beta-D-glucopyranoside) (PMGP). The pathway begins with the assembly of the polyketide-amino acid backbone by the hybrid PKS-NRPS tenS with the help of the enoyl reductase tenC. These enzymes catalyze the synthesis of the pyrrolidine-2-dione intermediates pretellinin A, 11-hydropretellenin A, 12-hydropretellenin A, 13-hydropretellenin A, 14-hydropretellenin A, 12-oxopretellenin A and prototellinin D. The cytochrome P450 monooxygenase tenA then catalyzes an oxidative ring expansion of pretenellin A and 14-hydropretellenin A to form the 2-pyridone core, leading to pretenellin B and pyridovericin, respectively. The cytochrome P450 monooxygenase tenB is then required for the selective N-hydroxylation of the 2-pyridone nitrogen of yield tellinin and 15-hydroxytellenin (15-HT), respectively. The UDP-glucosyltransferase GT1 and the methyltransferase MT1, located outside the tenS gene cluster, contribute to the stepwise glycosylation and methylation of 15-HT to obtain the glycoside pyridovericin-N-O-(4-O-methyl-beta-D-glucopyranoside) (PMGP). Additional related compounds such as 1-O-methyl-15-HT, (8Z)-1-O-methyl-15-HT, and O-methyltenellin A are also produced but the enzymes involved in their biosynthesis have still to be determined. The chain is UDP-glucosyltransferase 1 from Beauveria bassiana (strain ARSEF 2860) (White muscardine disease fungus).